The primary structure comprises 213 residues: MKPYQRQFIEFALGKQVLKFGEFTLKSGRKSPYFFNAGLFNTGRDLALLGRFYAEALVDSGLEFDLLFGPAYKGIPIATTTAVALAEHHDLDLPYCFNRKEAKDHGEGGNLVGSALQGRVMLVDDVITAGTAIRESMEIIQANGATLAGVLISLDRQERGRGEISAIQEVERDYNCKVISIITLKDLIAYLEEKPEMAEHLAAVKAYREEFGV.

Lysine 26 is a binding site for 5-phospho-alpha-D-ribose 1-diphosphate. 34-35 (FF) contacts orotate. 5-phospho-alpha-D-ribose 1-diphosphate contacts are provided by residues 72–73 (YK), arginine 99, lysine 100, lysine 103, histidine 105, and 124–132 (DDVITAGTA). Residues threonine 128 and arginine 156 each coordinate orotate.

The protein belongs to the purine/pyrimidine phosphoribosyltransferase family. PyrE subfamily. As to quaternary structure, homodimer. It depends on Mg(2+) as a cofactor.

The catalysed reaction is orotidine 5'-phosphate + diphosphate = orotate + 5-phospho-alpha-D-ribose 1-diphosphate. Its pathway is pyrimidine metabolism; UMP biosynthesis via de novo pathway; UMP from orotate: step 1/2. Its function is as follows. Catalyzes the transfer of a ribosyl phosphate group from 5-phosphoribose 1-diphosphate to orotate, leading to the formation of orotidine monophosphate (OMP). The polypeptide is Orotate phosphoribosyltransferase (Escherichia coli O157:H7).